Here is a 181-residue protein sequence, read N- to C-terminus: ATP synthase subunit delta (181 aa).

Belongs to the ATPase delta chain family. F-type ATPases have 2 components, F(1) - the catalytic core - and F(0) - the membrane proton channel. F(1) has five subunits: alpha(3), beta(3), gamma(1), delta(1), epsilon(1). F(0) has three main subunits: a(1), b(2) and c(10-14). The alpha and beta chains form an alternating ring which encloses part of the gamma chain. F(1) is attached to F(0) by a central stalk formed by the gamma and epsilon chains, while a peripheral stalk is formed by the delta and b chains.

It localises to the cell membrane. Its function is as follows. F(1)F(0) ATP synthase produces ATP from ADP in the presence of a proton or sodium gradient. F-type ATPases consist of two structural domains, F(1) containing the extramembraneous catalytic core and F(0) containing the membrane proton channel, linked together by a central stalk and a peripheral stalk. During catalysis, ATP synthesis in the catalytic domain of F(1) is coupled via a rotary mechanism of the central stalk subunits to proton translocation. This protein is part of the stalk that links CF(0) to CF(1). It either transmits conformational changes from CF(0) to CF(1) or is implicated in proton conduction. The protein is ATP synthase subunit delta of Lactiplantibacillus plantarum (strain ATCC BAA-793 / NCIMB 8826 / WCFS1) (Lactobacillus plantarum).